The sequence spans 355 residues: MHC class I-like protein MILL2 (355 aa).

An N-terminal signal peptide occupies residues 1–29 (MKASSGKPREFRPAVLLLILGLLLRDSRG). The segment at 46–137 (RLTRTHTLRY…VINQKSQEEG (92 aa)) is alpha-1. 3 disulfide bridges follow: Cys-96–Cys-107, Cys-147–Cys-210, and Cys-249–Cys-306. Asn-104 and Asn-152 each carry an N-linked (GlcNAc...) asparagine glycan. Residues 138 to 229 (LHTLQATLGC…SLRNGLQDTG (92 aa)) form an alpha-2 region. Residues 230–323 (PPMVTVTCRN…SIMQTAVSGH (94 aa)) are alpha-3. Residues 231-321 (PMVTVTCRNY…NHSIMQTAVS (91 aa)) form the Ig-like C1-type domain. Asn-312 carries an N-linked (GlcNAc...) asparagine glycan. The segment at 324-329 (AAEDSQ) is connecting peptide. Asp-330 carries GPI-anchor amidated aspartate lipidation. A propeptide spans 331–355 (VASSATASAGSALPVVLAVALARAN) (removed in mature form).

It belongs to the MHC class I family. As to quaternary structure, heterodimer with B2M (beta-2-microglobulin). N-glycosylated. Ubiquitously expressed in neonatal and adult tissues.

It is found in the cell membrane. Its function is as follows. Binds to heparan sulfate proteoglycans on the surface of fibroblast (NIH-3T3) cells. This is MHC class I-like protein MILL2 from Mus musculus (Mouse).